We begin with the raw amino-acid sequence, 311 residues long: Aspartate carbamoyltransferase catalytic subunit (311 aa).

Positions 55 and 56 each coordinate carbamoyl phosphate. L-aspartate is bound at residue K85. Positions 106, 135, and 138 each coordinate carbamoyl phosphate. 2 residues coordinate L-aspartate: R168 and R230. Positions 268 and 269 each coordinate carbamoyl phosphate.

It belongs to the aspartate/ornithine carbamoyltransferase superfamily. ATCase family. In terms of assembly, heterododecamer (2C3:3R2) of six catalytic PyrB chains organized as two trimers (C3), and six regulatory PyrI chains organized as three dimers (R2).

It catalyses the reaction carbamoyl phosphate + L-aspartate = N-carbamoyl-L-aspartate + phosphate + H(+). The protein operates within pyrimidine metabolism; UMP biosynthesis via de novo pathway; (S)-dihydroorotate from bicarbonate: step 2/3. In terms of biological role, catalyzes the condensation of carbamoyl phosphate and aspartate to form carbamoyl aspartate and inorganic phosphate, the committed step in the de novo pyrimidine nucleotide biosynthesis pathway. This is Aspartate carbamoyltransferase catalytic subunit from Pectobacterium atrosepticum (strain SCRI 1043 / ATCC BAA-672) (Erwinia carotovora subsp. atroseptica).